We begin with the raw amino-acid sequence, 217 residues long: ATP phosphoribosyltransferase (217 aa).

This sequence belongs to the ATP phosphoribosyltransferase family. Short subfamily. Heteromultimer composed of HisG and HisZ subunits.

The protein resides in the cytoplasm. The catalysed reaction is 1-(5-phospho-beta-D-ribosyl)-ATP + diphosphate = 5-phospho-alpha-D-ribose 1-diphosphate + ATP. Its pathway is amino-acid biosynthesis; L-histidine biosynthesis; L-histidine from 5-phospho-alpha-D-ribose 1-diphosphate: step 1/9. Catalyzes the condensation of ATP and 5-phosphoribose 1-diphosphate to form N'-(5'-phosphoribosyl)-ATP (PR-ATP). Has a crucial role in the pathway because the rate of histidine biosynthesis seems to be controlled primarily by regulation of HisG enzymatic activity. In Burkholderia vietnamiensis (strain G4 / LMG 22486) (Burkholderia cepacia (strain R1808)), this protein is ATP phosphoribosyltransferase.